Here is an 897-residue protein sequence, read N- to C-terminus: Protein SAP1 (897 aa).

Disordered stretches follow at residues 112–144 (EEPA…PVFQ), 195–219 (PSKP…PPLK), 302–398 (QMSD…TKST), 413–438 (SKSN…PNSV), and 456–561 (KKVA…REEP). The segment covering 120-137 (MPSSKTYTNHSSSFTRST) has biased composition (polar residues). Basic and acidic residues predominate over residues 209–219 (NPIEHNDPPLK). Low complexity predominate over residues 307–321 (SVTSSTSSNKSVSSS). A compositionally biased stretch (polar residues) spans 364 to 380 (LETSTTMDSSKIRNPQI). Residues 468–478 (KKSHPILKSKT) show a composition bias toward basic residues. Low complexity predominate over residues 480 to 496 (KVPNSSSKKTSSHPSRP). Over residues 497 to 523 (VSNSKPYSHGASQNKKPSKNQTTSMSK) the composition is skewed to polar residues. At Ser536 the chain carries Phosphoserine. 645–652 (GPPGTGKT) lines the ATP pocket.

The protein belongs to the AAA ATPase family. Interacts with SPT2/SIN1.

The chain is Protein SAP1 (SAP1) from Saccharomyces cerevisiae (strain ATCC 204508 / S288c) (Baker's yeast).